We begin with the raw amino-acid sequence, 174 residues long: Probable E3 ubiquitin-protein ligase RHA4A (174 aa).

Residues 105–147 (CCVCLGEFELKEELVEMPLCKHIFHLDCIHLWLYSHNTCPLCR) form an RING-type; atypical zinc finger. A disordered region spans residues 155–174 (TKTSVDDDNDHPDSPQTSPV).

Expressed in stems, flowers, cauline leaves and roots.

It catalyses the reaction S-ubiquitinyl-[E2 ubiquitin-conjugating enzyme]-L-cysteine + [acceptor protein]-L-lysine = [E2 ubiquitin-conjugating enzyme]-L-cysteine + N(6)-ubiquitinyl-[acceptor protein]-L-lysine.. The protein operates within protein modification; protein ubiquitination. Probable E3 ubiquitin-protein ligase that may possess E3 ubiquitin ligase activity in vitro. This Arabidopsis thaliana (Mouse-ear cress) protein is Probable E3 ubiquitin-protein ligase RHA4A.